Here is a 151-residue protein sequence, read N- to C-terminus: Ribosome maturation factor RimP (151 aa).

This sequence belongs to the RimP family.

It is found in the cytoplasm. In terms of biological role, required for maturation of 30S ribosomal subunits. The sequence is that of Ribosome maturation factor RimP from Caldicellulosiruptor saccharolyticus (strain ATCC 43494 / DSM 8903 / Tp8T 6331).